A 302-amino-acid chain; its full sequence is Olfactory receptor 51H1 (302 aa).

Residues 1 to 27 (MTNLNASQANHRNFILTGIPGTPDKNP) are Extracellular-facing. N-linked (GlcNAc...) asparagine glycosylation occurs at asparagine 5. A helical membrane pass occupies residues 28–48 (WLAFPLGFLYTLTLLGNGTIL). Residues 49–56 (AVIKVEPS) lie on the Cytoplasmic side of the membrane. A helical membrane pass occupies residues 57-77 (LHEPTYYFLSILALTDVSLSM). The Extracellular segment spans residues 78–101 (STLPSMLSIYWFNAPQIVFDACIM). A disulfide bridge connects residues cysteine 99 and cysteine 191. A helical membrane pass occupies residues 102–122 (QMFFIHVFGIVESGVLVSMAF). Residues 123–141 (DRFVAIRNPLHYVSILTHD) are Cytoplasmic-facing. The helical transmembrane segment at 142–162 (VIRKTGIAVLTRAVCVVFPVP) threads the bilayer. Over 163 to 198 (FLIKCLPFCHSNVLSHSYCLHQNMMRLACASTRINS) the chain is Extracellular. A helical membrane pass occupies residues 199–219 (LYGLIVVIFTLGLDVLLTLLS). At 220–239 (YVLTLKTVLGIVSRGERLKT) the chain is on the cytoplasmic side. The helical transmembrane segment at 240 to 260 (LSTCLSHMSTVLLFYVPFMGA) threads the bilayer. Residues 261–276 (ASMIHRFWEHLSPVVH) are Extracellular-facing. Residues 277 to 297 (MVMADIYLLLPPVLNPIVYSV) form a helical membrane-spanning segment. Residues 298–302 (KTKQI) are Cytoplasmic-facing.

The protein belongs to the G-protein coupled receptor 1 family.

The protein resides in the cell membrane. Functionally, odorant receptor. The protein is Olfactory receptor 51H1 (OR51H1) of Homo sapiens (Human).